The primary structure comprises 216 residues: Adenylate kinase (216 aa).

ATP is bound at residue 10-15; the sequence is GAGKGT. Residues 30–59 are NMP; the sequence is STGDMIRETIKSDSEIGKELKKVLDAGQLV. AMP is bound by residues threonine 31, arginine 36, 57–59, and glutamine 92; that span reads QLV. Residues 122–159 are LID; sequence GRRVHPASGRTYHTKFNPPKVEGKDDITGEDLITRTDD. ATP is bound by residues arginine 123 and 132-133; that span reads TY. 2 residues coordinate AMP: arginine 156 and arginine 167. Glutamine 202 contributes to the ATP binding site.

This sequence belongs to the adenylate kinase family. As to quaternary structure, monomer.

It localises to the cytoplasm. It catalyses the reaction AMP + ATP = 2 ADP. The protein operates within purine metabolism; AMP biosynthesis via salvage pathway; AMP from ADP: step 1/1. Catalyzes the reversible transfer of the terminal phosphate group between ATP and AMP. Plays an important role in cellular energy homeostasis and in adenine nucleotide metabolism. The polypeptide is Adenylate kinase (Francisella philomiragia subsp. philomiragia (strain ATCC 25017 / CCUG 19701 / FSC 153 / O#319-036)).